Here is a 1048-residue protein sequence, read N- to C-terminus: Putative cation efflux system protein SilA (1048 aa).

Transmembrane regions (helical) follow at residues 14 to 34 (FLVM…IINT), 125 to 145 (VSSE…YALV), 338 to 358 (LSSK…LFLW), 363 to 383 (ALVA…VMHF), 391 to 411 (MSLG…IVMI), 446 to 466 (VGPA…PIFT), 485 to 505 (SMAG…GFWI), 539 to 559 (TLLV…QVGG), 737 to 757 (GMTV…AMVG), 871 to 891 (KLKL…YLAF), 897 to 917 (ALLI…FLYW), 928 to 948 (TGFI…LMYL), 985 to 1005 (AMTV…TGAG), and 1012 to 1032 (IAAP…FIIP).

Belongs to the resistance-nodulation-cell division (RND) (TC 2.A.6) family.

The protein localises to the cell inner membrane. Component of the sil cation-efflux system that confers resistance to silver. May be part of a three-component cation/proton antiporter. The sequence is that of Putative cation efflux system protein SilA (silA) from Salmonella typhimurium.